A 143-amino-acid polypeptide reads, in one-letter code: Nucleoside diphosphate kinase (143 aa).

ATP-binding residues include K11, F59, R87, T93, R104, and N114. H117 functions as the Pros-phosphohistidine intermediate in the catalytic mechanism.

This sequence belongs to the NDK family. Homotetramer. Requires Mg(2+) as cofactor.

It is found in the cytoplasm. It catalyses the reaction a 2'-deoxyribonucleoside 5'-diphosphate + ATP = a 2'-deoxyribonucleoside 5'-triphosphate + ADP. The catalysed reaction is a ribonucleoside 5'-diphosphate + ATP = a ribonucleoside 5'-triphosphate + ADP. In terms of biological role, major role in the synthesis of nucleoside triphosphates other than ATP. The ATP gamma phosphate is transferred to the NDP beta phosphate via a ping-pong mechanism, using a phosphorylated active-site intermediate. This chain is Nucleoside diphosphate kinase, found in Shewanella loihica (strain ATCC BAA-1088 / PV-4).